The sequence spans 147 residues: Hemoglobin subunit delta (147 aa).

A Globin domain is found at 3–147 (HLTPEEKALV…VANALAHKYH (145 aa)). Phosphoserine is present on serine 51. Positions 64 and 93 each coordinate heme b.

It belongs to the globin family. As to quaternary structure, heterotetramer of two delta chains and two alpha chains. As to expression, red blood cells.

This Trichechus manatus (Caribbean manatee) protein is Hemoglobin subunit delta (HBD).